Here is a 1077-residue protein sequence, read N- to C-terminus: Carbamoyl phosphate synthase large chain (1077 aa).

Positions 1–403 (MPKRTDIQSI…SLHKALRGLE (403 aa)) are carboxyphosphate synthetic domain. ATP is bound by residues arginine 129, arginine 169, glycine 175, glycine 176, glutamate 208, leucine 210, glutamate 215, glycine 241, isoleucine 242, histidine 243, glutamine 285, and glutamate 299. Residues 133 to 328 (DKAMKSIGLE…IAKIAAKLAV (196 aa)) form the ATP-grasp 1 domain. The Mg(2+) site is built by glutamine 285, glutamate 299, and asparagine 301. Mn(2+) is bound by residues glutamine 285, glutamate 299, and asparagine 301. Residues 404 to 553 (VGATGFDEMV…YSSYDEECEA (150 aa)) form an oligomerization domain region. Residues 554 to 935 (NPTDKDKIMV…AYAKAELGCG (382 aa)) are carbamoyl phosphate synthetic domain. The region spanning 678 to 869 (QAAVERLGLL…LAKIAARVMA (192 aa)) is the ATP-grasp 2 domain. ATP contacts are provided by arginine 714, arginine 753, leucine 755, glutamate 760, glycine 785, valine 786, histidine 787, serine 788, glutamine 828, and glutamate 840. Positions 828, 840, and 842 each coordinate Mg(2+). Positions 828, 840, and 842 each coordinate Mn(2+). The MGS-like domain occupies 936–1077 (SVYPEGGRAL…HAKVKASLEA (142 aa)). Residues 936 to 1077 (SVYPEGGRAL…HAKVKASLEA (142 aa)) form an allosteric domain region.

This sequence belongs to the CarB family. Composed of two chains; the small (or glutamine) chain promotes the hydrolysis of glutamine to ammonia, which is used by the large (or ammonia) chain to synthesize carbamoyl phosphate. Tetramer of heterodimers (alpha,beta)4. Mg(2+) is required as a cofactor. It depends on Mn(2+) as a cofactor.

It catalyses the reaction hydrogencarbonate + L-glutamine + 2 ATP + H2O = carbamoyl phosphate + L-glutamate + 2 ADP + phosphate + 2 H(+). It carries out the reaction hydrogencarbonate + NH4(+) + 2 ATP = carbamoyl phosphate + 2 ADP + phosphate + 2 H(+). It functions in the pathway amino-acid biosynthesis; L-arginine biosynthesis; carbamoyl phosphate from bicarbonate: step 1/1. It participates in pyrimidine metabolism; UMP biosynthesis via de novo pathway; (S)-dihydroorotate from bicarbonate: step 1/3. Large subunit of the glutamine-dependent carbamoyl phosphate synthetase (CPSase). CPSase catalyzes the formation of carbamoyl phosphate from the ammonia moiety of glutamine, carbonate, and phosphate donated by ATP, constituting the first step of 2 biosynthetic pathways, one leading to arginine and/or urea and the other to pyrimidine nucleotides. The large subunit (synthetase) binds the substrates ammonia (free or transferred from glutamine from the small subunit), hydrogencarbonate and ATP and carries out an ATP-coupled ligase reaction, activating hydrogencarbonate by forming carboxy phosphate which reacts with ammonia to form carbamoyl phosphate. This Vibrio parahaemolyticus serotype O3:K6 (strain RIMD 2210633) protein is Carbamoyl phosphate synthase large chain.